The chain runs to 242 residues: MPLFIVETSCSLISWLFLYLLLCHLNSGRDSEWNCRLVTLFHGILIICLTAYIGFIAGPWPFTHPGTENTYFQILTLVLSLGYFLFDMAWCVYFRTEGPVMLAHHTMSIFGILLALGLGESGIETCAVLFGSEITNPLLQARWFLKRMGCYDSLAGDVVDLLFILLFASVRIGVGSRMLYCELTSPKPSLIVKVGGVAIYTLSWIFMVDIARFACRKTCGKYRRWKEQYKLDGVNGHAVKIK.

Helical transmembrane passes span 3–23, 37–57, 74–94, 109–129, 154–174, and 190–210; these read LFIVETSCSLISWLFLYLLLC, LVTLFHGILIICLTAYIGFIA, ILTLVLSLGYFLFDMAWCVYF, IFGILLALGLGESGIETCAVL, LAGDVVDLLFILLFASVRIGV, and LIVKVGGVAIYTLSWIFMVDI. The 192-residue stretch at 28-219 folds into the TLC domain; it reads GRDSEWNCRL…IARFACRKTC (192 aa).

It belongs to the TLCD5 family.

It localises to the membrane. The protein is TLC domain-containing protein 5 (tlcd5) of Danio rerio (Zebrafish).